The following is a 335-amino-acid chain: Nucleoid-associated protein YejK (335 aa).

This sequence belongs to the YejK family.

Its subcellular location is the cytoplasm. The protein resides in the nucleoid. The protein is Nucleoid-associated protein YejK of Shigella boydii serotype 18 (strain CDC 3083-94 / BS512).